The following is a 76-amino-acid chain: Protein OPG128 (76 aa).

An intrachain disulfide couples Cys-17 to Cys-21.

Belongs to the orthopoxvirus OPG128 family. As to quaternary structure, interacts with sulfhydryl oxidase OPG072; this interaction involves formation of a transient disulfide-bonded intermediate, allowing disulfide bond transfer. Interacts with OPG088; this interaction involves formation of a transient disulfide-bonded intermediate, allowing disulfide bond transfer.

Its function is as follows. Late protein which probably participates in disulfide bond formation by functioning as a thiol-disulfide transfer protein between membrane-associated OPG072 and OPG08. The complete pathway for formation of disulfide bonds in intracellular virion membrane proteins sequentially involves oxidation of OPG072, OPG128 and OPG08. The protein is Protein OPG128 (OPG128) of Variola virus (isolate Human/India/Ind3/1967) (VARV).